A 392-amino-acid chain; its full sequence is DNA-directed RNA polymerase subunit Rpo1C (392 aa).

Belongs to the RNA polymerase beta' chain family. As to quaternary structure, part of the RNA polymerase complex.

It is found in the cytoplasm. The enzyme catalyses RNA(n) + a ribonucleoside 5'-triphosphate = RNA(n+1) + diphosphate. Its function is as follows. DNA-dependent RNA polymerase (RNAP) catalyzes the transcription of DNA into RNA using the four ribonucleoside triphosphates as substrates. Forms part of the jaw domain. This is DNA-directed RNA polymerase subunit Rpo1C from Sulfurisphaera tokodaii (strain DSM 16993 / JCM 10545 / NBRC 100140 / 7) (Sulfolobus tokodaii).